Consider the following 169-residue polypeptide: 6,7-dimethyl-8-ribityllumazine synthase (169 aa).

5-amino-6-(D-ribitylamino)uracil contacts are provided by residues tryptophan 27, 61–63 (SYE), and 90–92 (VLI). 95 to 96 (ST) is a (2S)-2-hydroxy-3-oxobutyl phosphate binding site. Histidine 98 functions as the Proton donor in the catalytic mechanism. A 5-amino-6-(D-ribitylamino)uracil-binding site is contributed by phenylalanine 123. Arginine 137 is a (2S)-2-hydroxy-3-oxobutyl phosphate binding site.

The protein belongs to the DMRL synthase family. Homopentamer.

It localises to the mitochondrion intermembrane space. The enzyme catalyses (2S)-2-hydroxy-3-oxobutyl phosphate + 5-amino-6-(D-ribitylamino)uracil = 6,7-dimethyl-8-(1-D-ribityl)lumazine + phosphate + 2 H2O + H(+). Its pathway is cofactor biosynthesis; riboflavin biosynthesis; riboflavin from 2-hydroxy-3-oxobutyl phosphate and 5-amino-6-(D-ribitylamino)uracil: step 1/2. Functionally, catalyzes the formation of 6,7-dimethyl-8-ribityllumazine by condensation of 5-amino-6-(D-ribitylamino)uracil with 3,4-dihydroxy-2-butanone 4-phosphate. This is the penultimate step in the biosynthesis of riboflavin. The polypeptide is 6,7-dimethyl-8-ribityllumazine synthase (RIB4) (Saccharomyces cerevisiae (strain ATCC 204508 / S288c) (Baker's yeast)).